The following is a 102-amino-acid chain: MTEILPTWHLYMLRMPSGMLYTGITTDVTRRLAQHQAGKGAKALRGKGQLVLAFHCQAGDRSKALRLEYRVKQLSKTQKERLVSHPPLSLDYLLPDVAVKAG.

One can recognise a GIY-YIG domain in the interval 6 to 81 (PTWHLYMLRM…KQLSKTQKER (76 aa)).

The protein belongs to the UPF0213 family.

The chain is UPF0213 protein Spro_0507 from Serratia proteamaculans (strain 568).